The chain runs to 160 residues: S-ribosylhomocysteine lyase (160 aa).

Fe cation contacts are provided by histidine 57, histidine 61, and cysteine 127.

This sequence belongs to the LuxS family. Homodimer. Fe cation is required as a cofactor.

It carries out the reaction S-(5-deoxy-D-ribos-5-yl)-L-homocysteine = (S)-4,5-dihydroxypentane-2,3-dione + L-homocysteine. Functionally, involved in the synthesis of autoinducer 2 (AI-2) which is secreted by bacteria and is used to communicate both the cell density and the metabolic potential of the environment. The regulation of gene expression in response to changes in cell density is called quorum sensing. Catalyzes the transformation of S-ribosylhomocysteine (RHC) to homocysteine (HC) and 4,5-dihydroxy-2,3-pentadione (DPD). The polypeptide is S-ribosylhomocysteine lyase (Streptococcus sanguinis (strain SK36)).